The chain runs to 560 residues: Dihydroxy-acid dehydratase (560 aa).

Cys50 is a [2Fe-2S] cluster binding site. Asp82 serves as a coordination point for Mg(2+). [2Fe-2S] cluster is bound at residue Cys123. Mg(2+)-binding residues include Asp124 and Lys125. Position 125 is an N6-carboxylysine (Lys125). Cys195 is a binding site for [2Fe-2S] cluster. Glu447 is a Mg(2+) binding site. Residue Ser473 is the Proton acceptor of the active site.

It belongs to the IlvD/Edd family. As to quaternary structure, homodimer. It depends on [2Fe-2S] cluster as a cofactor. Mg(2+) is required as a cofactor.

It catalyses the reaction (2R)-2,3-dihydroxy-3-methylbutanoate = 3-methyl-2-oxobutanoate + H2O. It carries out the reaction (2R,3R)-2,3-dihydroxy-3-methylpentanoate = (S)-3-methyl-2-oxopentanoate + H2O. It functions in the pathway amino-acid biosynthesis; L-isoleucine biosynthesis; L-isoleucine from 2-oxobutanoate: step 3/4. It participates in amino-acid biosynthesis; L-valine biosynthesis; L-valine from pyruvate: step 3/4. In terms of biological role, functions in the biosynthesis of branched-chain amino acids. Catalyzes the dehydration of (2R,3R)-2,3-dihydroxy-3-methylpentanoate (2,3-dihydroxy-3-methylvalerate) into 2-oxo-3-methylpentanoate (2-oxo-3-methylvalerate) and of (2R)-2,3-dihydroxy-3-methylbutanoate (2,3-dihydroxyisovalerate) into 2-oxo-3-methylbutanoate (2-oxoisovalerate), the penultimate precursor to L-isoleucine and L-valine, respectively. The polypeptide is Dihydroxy-acid dehydratase (Thermosynechococcus vestitus (strain NIES-2133 / IAM M-273 / BP-1)).